The primary structure comprises 98 residues: Putative protein adenylyltransferase MJ0126 (98 aa).

Positions 31–45 (GSYARNEQTETSDID) match the GSX(10)DXD motif motif. The Mg(2+) site is built by aspartate 43, aspartate 45, and aspartate 75.

Belongs to the MntA antitoxin family. In terms of assembly, probably forms a complex with cognate toxin MJ0125. Requires Mg(2+) as cofactor.

It catalyses the reaction L-tyrosyl-[protein] + ATP = O-(5'-adenylyl)-L-tyrosyl-[protein] + diphosphate. The enzyme catalyses O-(5'-adenylyl)-L-tyrosyl-[protein] + ATP = O-[5'-(adenylyl-(5'-&gt;3')-adenylyl)]-L-tyrosyl-[protein] + diphosphate. Functionally, probable antitoxin component of a putative type VII toxin-antitoxin (TA) system. Neutralizes cognate toxic MJ0125 by di-AMPylation. This Methanocaldococcus jannaschii (strain ATCC 43067 / DSM 2661 / JAL-1 / JCM 10045 / NBRC 100440) (Methanococcus jannaschii) protein is Putative protein adenylyltransferase MJ0126.